The chain runs to 213 residues: Na(+)-translocating NADH-quinone reductase subunit D (213 aa).

Helical transmembrane passes span 21–41 (PLIA…VKTA), 42–62 (ITMG…VSLL), 77–97 (IIIS…FFNI), 101–121 (LSVF…AESL), 131–151 (FLDG…VSII), and 183–203 (FGLM…IWVV).

This sequence belongs to the NqrDE/RnfAE family. Composed of six subunits; NqrA, NqrB, NqrC, NqrD, NqrE and NqrF.

Its subcellular location is the cell inner membrane. The catalysed reaction is a ubiquinone + n Na(+)(in) + NADH + H(+) = a ubiquinol + n Na(+)(out) + NAD(+). NQR complex catalyzes the reduction of ubiquinone-1 to ubiquinol by two successive reactions, coupled with the transport of Na(+) ions from the cytoplasm to the periplasm. NqrA to NqrE are probably involved in the second step, the conversion of ubisemiquinone to ubiquinol. The polypeptide is Na(+)-translocating NADH-quinone reductase subunit D (Chlamydia felis (strain Fe/C-56) (Chlamydophila felis)).